The following is a 504-amino-acid chain: MGVYSVLLAIVVVLVGYLLLKWRRALHYWQNLDIPCEEPHILMGSLTGVQTSRSFSAIWMDYYNKFRGTGPFAGFYWFQRPGILVLDISLAKLILIKEFNKFTDRGFYHNTEDDPLSGQLFLLDGQKWKSMRSKLSYTFTSGKMKYMFPTVVKVGHEFIEVFGQAMEKSPIVEVRDILARFTTDVIGTCAFGIECSSLKDPEAEFRVMGRRAIFEQRHGPIGIAFINSFQNLARRLHMKITLEEAEHFFLRIVRETVAFREKNNIRRNDFMDQLIDLKNSPLTKSESGESVNLTIEEMAAQAFVFFGAGFETSSTTMGFALYELAQHQDIQDRVRKECQEVIGKYNGEITYESMKDMVYLDQVISETLRLYTVLPVLNRECLEDYEVPGHPKYVIKKGMPVLIPCGAMHRDEKLYANPNTFNPDNFSPERVKERDSVEWLPFGDGPRNCIGMRFGQMQARSGLALLINRFKFSVCEQTTIPIVYSKKTFLISSETGIFLKVERV.

Residue cysteine 449 participates in heme binding.

Belongs to the cytochrome P450 family. Heme serves as cofactor.

It localises to the endoplasmic reticulum membrane. Its subcellular location is the microsome membrane. Involved in the metabolism of insect hormones and in the breakdown of synthetic insecticides. The polypeptide is Cytochrome P450 6a9 (Cyp6a9) (Drosophila melanogaster (Fruit fly)).